The following is a 290-amino-acid chain: Fat storage-inducing transmembrane protein 1 (290 aa).

A run of 5 helical transmembrane segments spans residues 1-21 (MFLN…LGNT), 26-46 (HFHL…LWVS), 65-85 (SGWG…SFSV), 173-193 (LLLC…GPYL), and 205-225 (ILFL…LCLL).

It belongs to the FIT family. FIT1 subfamily.

It is found in the endoplasmic reticulum membrane. In terms of biological role, may play an important role in the formation of lipid droplets (LDs) which are storage organelles at the center of lipid and energy homeostasis. May directly bind to diacylglycerol (DAGs) and triacylglycerol. This Danio rerio (Zebrafish) protein is Fat storage-inducing transmembrane protein 1 (fitm1l).